The chain runs to 201 residues: IMP cyclohydrolase (201 aa).

It belongs to the archaeal IMP cyclohydrolase family.

The enzyme catalyses IMP + H2O = 5-formamido-1-(5-phospho-D-ribosyl)imidazole-4-carboxamide. The protein operates within purine metabolism; IMP biosynthesis via de novo pathway; IMP from 5-formamido-1-(5-phospho-D-ribosyl)imidazole-4-carboxamide: step 1/1. In terms of biological role, catalyzes the cyclization of 5-formylamidoimidazole-4-carboxamide ribonucleotide to IMP. This Methanococcus maripaludis (strain C6 / ATCC BAA-1332) protein is IMP cyclohydrolase.